The following is a 351-amino-acid chain: MINNPLLTVKNLNKFFNEQQVLHDISFSLQRGEILFLLGASGCGKTTLLRAIAGFEHPNTGEIWLKERLIFGENFNLPTQQRHLGYVVQEGVLFPHLNVYRNIAYGLGNGKGKNSEEKTRIEQIMQLTGIFELADRFPHQLSGGQQQRVALARALAPNPELILLDEPFSALDEHLRQQIRQEMLQALRQSGASAIFVTHDRDESLRYADKIAIIQQGKILQIDTPRTLYWSPNHLETAKFMGESIVLPANLLDENTAQCQLGNIPIKNKSISQNQGRILLRPEQFSLFKTSENPTALFNGQIKQIEFKGKITSIQIEINGYAIWIENVISPDLSIGDNLPVYLHRKGLFYA.

Positions 7 to 241 constitute an ABC transporter domain; it reads LTVKNLNKFF…PNHLETAKFM (235 aa). Residue 39 to 46 coordinates ATP; sequence GASGCGKT.

The protein belongs to the ABC transporter superfamily. Fe(3+) ion importer (TC 3.A.1.10) family. As to quaternary structure, the complex is composed of two ATP-binding proteins (FbpC), two transmembrane proteins (FbpB) and a solute-binding protein (FbpA).

The protein localises to the cell inner membrane. The enzyme catalyses Fe(3+)(out) + ATP + H2O = Fe(3+)(in) + ADP + phosphate + H(+). Part of the ABC transporter complex FbpABC involved in Fe(3+) ions import. Responsible for energy coupling to the transport system. The protein is Fe(3+) ions import ATP-binding protein FbpC of Haemophilus influenzae (strain 86-028NP).